The chain runs to 364 residues: UDP-N-acetylglucosamine--N-acetylmuramyl-(pentapeptide) pyrophosphoryl-undecaprenol N-acetylglucosamine transferase (364 aa).

Residues 10–12 (TGG), Asn124, Ser195, Ile250, and Gln295 each bind UDP-N-acetyl-alpha-D-glucosamine.

It belongs to the glycosyltransferase 28 family. MurG subfamily.

The protein localises to the cell membrane. It carries out the reaction Mur2Ac(oyl-L-Ala-gamma-D-Glu-L-Lys-D-Ala-D-Ala)-di-trans,octa-cis-undecaprenyl diphosphate + UDP-N-acetyl-alpha-D-glucosamine = beta-D-GlcNAc-(1-&gt;4)-Mur2Ac(oyl-L-Ala-gamma-D-Glu-L-Lys-D-Ala-D-Ala)-di-trans,octa-cis-undecaprenyl diphosphate + UDP + H(+). It participates in cell wall biogenesis; peptidoglycan biosynthesis. Cell wall formation. Catalyzes the transfer of a GlcNAc subunit on undecaprenyl-pyrophosphoryl-MurNAc-pentapeptide (lipid intermediate I) to form undecaprenyl-pyrophosphoryl-MurNAc-(pentapeptide)GlcNAc (lipid intermediate II). This chain is UDP-N-acetylglucosamine--N-acetylmuramyl-(pentapeptide) pyrophosphoryl-undecaprenol N-acetylglucosamine transferase, found in Levilactobacillus brevis (strain ATCC 367 / BCRC 12310 / CIP 105137 / JCM 1170 / LMG 11437 / NCIMB 947 / NCTC 947) (Lactobacillus brevis).